The following is a 317-amino-acid chain: Protoheme IX farnesyltransferase (317 aa).

8 helical membrane-spanning segments follow: residues 44-64, 93-113, 116-136, 143-163, 178-198, 221-241, 243-263, and 288-308; these read IGLI…ANTF, HASV…WVLC, VLAG…YTKY, LNIV…WAVI, AIVL…ALAM, VTRQ…LLIP, ASWI…VMAV, and LAVY…TIGG.

This sequence belongs to the UbiA prenyltransferase family. Protoheme IX farnesyltransferase subfamily.

The protein localises to the cell membrane. It carries out the reaction heme b + (2E,6E)-farnesyl diphosphate + H2O = Fe(II)-heme o + diphosphate. Its pathway is porphyrin-containing compound metabolism; heme O biosynthesis; heme O from protoheme: step 1/1. Converts heme B (protoheme IX) to heme O by substitution of the vinyl group on carbon 2 of heme B porphyrin ring with a hydroxyethyl farnesyl side group. The protein is Protoheme IX farnesyltransferase of Corynebacterium diphtheriae (strain ATCC 700971 / NCTC 13129 / Biotype gravis).